The primary structure comprises 1591 residues: Rho guanine nucleotide exchange factor TIAM1 (1591 aa).

The tract at residues 1–78 (MGNAESQHVE…AENGLEPFSQ (78 aa)) is disordered. Glycine 2 is lipidated: N-myristoyl glycine. The segment covering 7–19 (QHVEHEFYGEKHA) has biased composition (basic and acidic residues). Basic residues predominate over residues 20 to 49 (SLGRKHTSRSLRLSHKTRRTRHASSGKVIH). Over residues 53–67 (EVSTRSSSTPSIPQS) the composition is skewed to low complexity. At serine 231 the chain carries Phosphoserine. 2 disordered regions span residues 298–379 (SEGA…GDAA) and 393–422 (MSTT…SPGQ). Polar residues-rich tracts occupy residues 300–313 (GATN…NSMQ) and 340–361 (TTDT…SPTT). Phosphoserine occurs at positions 356 and 358. Over residues 367–377 (GSDSGSSSTGD) the composition is skewed to low complexity. Residues 412-422 (QSSGTLSSPGQ) are compositionally biased toward polar residues. One can recognise a PH 1 domain in the interval 434-549 (VRKAGALAVK…TAIHSACATA (116 aa)). A Phosphoserine modification is found at serine 695. Residues 765–832 (TPSWFCLPNN…QPEEDIYELL (68 aa)) form the RBD domain. Phosphotyrosine; by NTRK2 is present on tyrosine 829. Residues 845–908 (SIHIEKSDTA…NNRAADALNS (64 aa)) form the PDZ domain. The tract at residues 939-1034 (SPPHRVDGPA…TGPQLATMRQ (96 aa)) is disordered. Residues 958–975 (LTSNPGHSLCSEQGSSAE) are compositionally biased toward polar residues. A compositionally biased stretch (acidic residues) spans 977-990 (APEETEGPDLESSD). Residues 1014 to 1024 (PSDQSPSPQDS) show a composition bias toward low complexity. A compositionally biased stretch (polar residues) spans 1025–1034 (TGPQLATMRQ). The 195-residue stretch at 1040–1234 (KLRKVICELL…NKVASHINEM (195 aa)) folds into the DH domain. The 137-residue stretch at 1261–1397 (DLSMGDLLLH…KAVHSILRDK (137 aa)) folds into the PH 2 domain. Tyrosine 1323 bears the Phosphotyrosine mark. Residues lysine 1404 and lysine 1420 each participate in a glycyl lysine isopeptide (Lys-Gly) (interchain with G-Cter in ubiquitin) cross-link. The tract at residues 1456–1482 (TIDSDAVSASSPEKESQQPPGGGDTDR) is disordered. At serine 1519 the chain carries Phosphoserine.

This sequence belongs to the TIAM family. As to quaternary structure, component of the Par polarity complex, composed of at least phosphorylated PRKCZ, PARD3 and TIAM1. Interacts with NTRK2; mediates the activation of RAC1 by BDNF. Interacts with MAPK8IP2 and CD44. Interacts with BAIAP2. Interacts with EPHA8; regulates clathrin-mediated endocytosis of EPHA8. Interacts with PARD3. Interacts (via PDZ domain) with CNTNAP4, SDC1 and SDC3 (via C-terminus). In terms of processing, ubiquitinated. Undergoes 'Lys-48' ubiquitination at Lys-1404 and Lys-1420 by a CUL3(KBTBD6/7) E3 ubiquitin ligase complex composed of CUL3, RBX1, KBTBD6 and KBTBD7. 'Lys-48' ubiquitination at Lys-1404 and Lys-1420 triggers proteasomal degradation. Ubiquitination at Lys-1404 and Lys-1420 by CUL3(KBTBD6/7) also requires the membrane-associated protein GABARAP and may therefore be spatially restricted within the cell. Found in virtually all analyzed tumor cell lines including B- and T-lymphomas, neuroblastomas, melanomas and carcinomas.

The protein localises to the cell junction. Its subcellular location is the cell membrane. Functionally, guanyl-nucleotide exchange factor that activates RHO-like proteins and connects extracellular signals to cytoskeletal activities. Activates RAC1, CDC42, and to a lesser extent RHOA and their downstream signaling to regulate processes like cell adhesion and cell migration. This is Rho guanine nucleotide exchange factor TIAM1 from Homo sapiens (Human).